We begin with the raw amino-acid sequence, 188 residues long: dCTP deaminase (188 aa).

Residues 111-116 (KSTYAR), 135-137 (TLE), Gln-156, Tyr-170, and Gln-180 each bind dCTP. Glu-137 functions as the Proton donor/acceptor in the catalytic mechanism.

This sequence belongs to the dCTP deaminase family. In terms of assembly, homotrimer.

It carries out the reaction dCTP + H2O + H(+) = dUTP + NH4(+). It participates in pyrimidine metabolism; dUMP biosynthesis; dUMP from dCTP (dUTP route): step 1/2. Its function is as follows. Catalyzes the deamination of dCTP to dUTP. The protein is dCTP deaminase of Dechloromonas aromatica (strain RCB).